We begin with the raw amino-acid sequence, 347 residues long: S-adenosylmethionine:tRNA ribosyltransferase-isomerase (347 aa).

It belongs to the QueA family. As to quaternary structure, monomer.

It localises to the cytoplasm. The catalysed reaction is 7-aminomethyl-7-carbaguanosine(34) in tRNA + S-adenosyl-L-methionine = epoxyqueuosine(34) in tRNA + adenine + L-methionine + 2 H(+). Its pathway is tRNA modification; tRNA-queuosine biosynthesis. In terms of biological role, transfers and isomerizes the ribose moiety from AdoMet to the 7-aminomethyl group of 7-deazaguanine (preQ1-tRNA) to give epoxyqueuosine (oQ-tRNA). This chain is S-adenosylmethionine:tRNA ribosyltransferase-isomerase, found in Gluconobacter oxydans (strain 621H) (Gluconobacter suboxydans).